A 379-amino-acid chain; its full sequence is Glutamate 5-kinase (379 aa).

K19 provides a ligand contact to ATP. S59, D146, and N158 together coordinate substrate. Residues T178–D179 and T220–K226 each bind ATP. The 79-residue stretch at S285–D363 folds into the PUA domain.

This sequence belongs to the glutamate 5-kinase family.

The protein localises to the cytoplasm. The catalysed reaction is L-glutamate + ATP = L-glutamyl 5-phosphate + ADP. The protein operates within amino-acid biosynthesis; L-proline biosynthesis; L-glutamate 5-semialdehyde from L-glutamate: step 1/2. Functionally, catalyzes the transfer of a phosphate group to glutamate to form L-glutamate 5-phosphate. This Vibrio parahaemolyticus serotype O3:K6 (strain RIMD 2210633) protein is Glutamate 5-kinase.